Reading from the N-terminus, the 982-residue chain is Little elongation complex subunit 2 (982 aa).

2 positions are modified to phosphoserine: serine 17 and serine 326. Over residues 410–427 the composition is skewed to polar residues; the sequence is TTKVSKSPSPASTSTVPN. Disordered regions lie at residues 410–450 and 473–504; these read TTKV…PDIS and GMDG…PLIQ. Basic and acidic residues predominate over residues 479–497; sequence EECKNKDDQGFESCEKVSN. Serine 571 is modified (phosphoserine). Position 573 is a phosphothreonine (threonine 573). Disordered stretches follow at residues 595-623, 672-697, and 930-982; these read VGSN…NTAC, ENSK…KSGW, and PKSL…RKIT. A compositionally biased stretch (low complexity) spans 597–610; sequence SNLSSRPASPNSSS. Polar residues-rich tracts occupy residues 611–623 and 672–683; these read GQAS…NTAC and ENSKQPSVSEQL. Positions 684–697 are enriched in low complexity; it reads SGPSDSSSWPKSGW. The span at 956–970 shows a compositional bias: polar residues; that stretch reads SMETKSSCLPAQQVE.

It belongs to the ICE2 family. As to quaternary structure, component of the little elongation complex (LEC), at least composed of ELL (ELL, ELL2 or ELL3), ZC3H8, ICE1 and ICE2. Interacts with ICE1 (via C-terminus domain). Interacts with ELL. Expressed at low levels in lung and testis.

The protein localises to the nucleus. In terms of biological role, component of the little elongation complex (LEC), a complex required to regulate small nuclear RNA (snRNA) gene transcription by RNA polymerase II and III. This is Little elongation complex subunit 2 (ICE2) from Homo sapiens (Human).